Here is a 324-residue protein sequence, read N- to C-terminus: MFSFSEFYKLIAQHETLRPWLNTLPKQLSDWEEAEHGDMGRWIRALKKFPTDKPDIIDIKNEVSVRYEDGIANGEQKRLESLLRLLHPWRKGPYNMHGIHIDTEWRSDWKWDRVLPHISPLQGRSVLDVGCGNGYHMWRMLGEGAALTVGIDPSNLFLIQFEAIRRLMGDDNRAFLLPLGIEQLPELKAFDTVFSMGVLYHRRSPLDHIIQLKNQLRKDGEVILETLVIEGDENAVLVPTGRYAQMHNVYFFPSAKALKVWMEKCGFVDVRIVDESVTTTDEQRSTDWMTNNSLPEYLSPDDPTKTIEGYPAPKRAILVARNPD.

Residues Lys91, Trp105, Lys110, Gly130, 152-154, 181-182, Met196, Tyr200, and Arg315 each bind carboxy-S-adenosyl-L-methionine; these read DPS and IE.

This sequence belongs to the class I-like SAM-binding methyltransferase superfamily. CmoB family. As to quaternary structure, homotetramer.

It carries out the reaction carboxy-S-adenosyl-L-methionine + 5-hydroxyuridine(34) in tRNA = 5-carboxymethoxyuridine(34) in tRNA + S-adenosyl-L-homocysteine + H(+). Functionally, catalyzes carboxymethyl transfer from carboxy-S-adenosyl-L-methionine (Cx-SAM) to 5-hydroxyuridine (ho5U) to form 5-carboxymethoxyuridine (cmo5U) at position 34 in tRNAs. This Photobacterium profundum (strain SS9) protein is tRNA U34 carboxymethyltransferase.